The chain runs to 528 residues: Protein spinster homolog 1 (528 aa).

Positions 1-38 are disordered; that stretch reads MAGSDTAPFLSQADDPDDGPAPGHPGLPGPMGNPKSGE. At A2 the chain carries N-acetylalanine. The next 12 membrane-spanning stretches (helical) occupy residues 60–80, 98–118, 126–146, 160–180, 187–207, 218–238, 278–298, 323–343, 357–377, 381–401, 421–441, and 465–485; these read LIVV…FTVA, GLIQ…FGYL, YLMC…SFIP, VGVG…DLFV, MLSI…IAGS, WALR…FLVV, LGFT…PAFL, LIFG…GVEI, LVCA…LACA, IVAT…NWAI, FQIV…IGLI, and MLCA…AMFI. At S518 the chain carries Phosphoserine.

The protein belongs to the major facilitator superfamily. Spinster (TC 2.A.1.49) family. Interacts with BCL2 and BCL2L1. Expressed in liver (at mRNA and protein levels).

Its subcellular location is the lysosome membrane. The enzyme catalyses a 1-acyl-sn-glycero-3-phosphocholine(out) + H(+)(out) = a 1-acyl-sn-glycero-3-phosphocholine(in) + H(+)(in). It carries out the reaction 1-hexadecanoyl-sn-glycero-3-phosphocholine(out) + H(+)(out) = 1-hexadecanoyl-sn-glycero-3-phosphocholine(in) + H(+)(in). It catalyses the reaction 1-(9Z-octadecenoyl)-sn-glycero-3-phosphocholine(out) + H(+)(out) = 1-(9Z-octadecenoyl)-sn-glycero-3-phosphocholine(in) + H(+)(in). The catalysed reaction is 1-(5Z,8Z,11Z,14Z-eicosatetraenoyl)-sn-glycero-3-phosphocholine(out) + H(+)(out) = 1-(5Z,8Z,11Z,14Z-eicosatetraenoyl)-sn-glycero-3-phosphocholine(in) + H(+)(in). The enzyme catalyses 1-(4Z,7Z,10Z,13Z,16Z,19Z-docosahexaenoyl)-sn-glycero-3-phosphocholine(out) + H(+)(out) = 1-(4Z,7Z,10Z,13Z,16Z,19Z-docosahexaenoyl)-sn-glycero-3-phosphocholine(in) + H(+)(in). It carries out the reaction a 1-acyl-sn-glycero-3-phosphoethanolamine(out) + H(+)(out) = a 1-acyl-sn-glycero-3-phosphoethanolamine(in) + H(+)(in). It catalyses the reaction 1-(9Z-octadecenoyl)-sn-glycero-3-phosphoethanolamine(out) + H(+)(out) = 1-(9Z-octadecenoyl)-sn-glycero-3-phosphoethanolamine(in) + H(+)(in). The catalysed reaction is 1-acyl-sn-glycero-3-phospho-(1'-sn-glycerol)(out) + H(+)(out) = 1-acyl-sn-glycero-3-phospho-(1'-sn-glycerol)(in) + H(+)(in). The enzyme catalyses 1-(9Z-octadecenoyl)-sn-glycero-3-phospho-(1'-sn-glycerol)(out) + H(+)(out) = 1-(9Z-octadecenoyl)-sn-glycero-3-phospho-(1'-sn-glycerol)(in) + H(+)(in). It carries out the reaction a 1-O-(1Z-alkenyl)-sn-glycero-3-phosphocholine(out) + H(+)(out) = a 1-O-(1Z-alkenyl)-sn-glycero-3-phosphocholine(in) + H(+)(in). It catalyses the reaction 1-(1Z-hexadecenyl)-sn-glycero-3-phosphocholine(out) + H(+)(out) = 1-(1Z-hexadecenyl)-sn-glycero-3-phosphocholine(in) + H(+)(in). The catalysed reaction is a 1-O-(1Z-alkenyl)-sn-glycero-3-phosphoethanolamine(out) + H(+)(out) = a 1-O-(1Z-alkenyl)-sn-glycero-3-phosphoethanolamine(in) + H(+)(in). The enzyme catalyses 1-O-(1Z-hexadecenyl)-sn-glycero-3-phosphoethanolamine(out) + H(+)(out) = 1-O-(1Z-hexadecenyl)-sn-glycero-3-phosphoethanolamine(in) + H(+)(in). In terms of biological role, plays a critical role in the phospholipid salvage pathway from lysosomes to the cytosol. Mediates the rate-limiting, proton-dependent, lysosomal efflux of lysophospholipids, which can then be reacylated by acyltransferases in the endoplasmic reticulum to form phospholipids. Selective for zwitterionic headgroups such as lysophosphatidylcholine (LPC) and lysophosphatidylethanolamine (LPE), can also transport lysophosphatidylglycerol (LPG), but not other anionic lysophospholipids, sphingosine, nor sphingomyelin. Transports lysophospholipids with saturated, monounsaturated, and polyunsaturated fatty acids, such as 1-hexadecanoyl-sn-glycero-3-phosphocholine, 1-(9Z-octadecenoyl)-sn-glycero-3-phosphocholine and 1-(4Z,7Z,10Z,13Z,16Z,19Z-docosahexaenoyl)-sn-glycero-3-phosphocholine, respectively. Can also transport lysoplasmalogen (LPC with a fatty alcohol) such as 1-(1Z-hexadecenyl)-sn-glycero-3-phosphocholine. Essential player in lysosomal homeostasis. Crucial for cell survival under conditions of nutrient limitation. May be involved in necrotic or autophagic cell death. The chain is Protein spinster homolog 1 (Spns1) from Mus musculus (Mouse).